Reading from the N-terminus, the 261-residue chain is Cytochrome c oxidase subunit 3 (261 aa).

Residues 1 to 15 (MTHQSHAYHMVKPSP) are Mitochondrial matrix-facing. The chain crosses the membrane as a helical span at residues 16–34 (WPLTGALSALLMTSGLAMW). Residues 35 to 40 (FHFHSM) lie on the Mitochondrial intermembrane side of the membrane. The chain crosses the membrane as a helical span at residues 41–66 (TLLMLGLLTNTLTMYQWWRDVTREST). Residues 67–72 (YQGHHT) lie on the Mitochondrial matrix side of the membrane. The chain crosses the membrane as a helical span at residues 73-105 (PPVQKGLRYGMILFITSEVFFFAGFFWAFYHSS). Over 106-128 (LAPTPQLGGHWPPTGITPLNPLE) the chain is Mitochondrial intermembrane. A helical membrane pass occupies residues 129–152 (VPLLNTSVLLASGVSITWAHHSLM). The Mitochondrial matrix portion of the chain corresponds to 153–155 (ENN). The helical transmembrane segment at 156-183 (RNQMIQALLITILLGLYFTLLQASEYFE) threads the bilayer. The Mitochondrial intermembrane portion of the chain corresponds to 184 to 190 (SPFTISD). The chain crosses the membrane as a helical span at residues 191–223 (GIYGSTFFVATGFHGLHVIIGSTFLTICFIRQL). Residues 224–232 (MFHFTSKHH) are Mitochondrial matrix-facing. A helical membrane pass occupies residues 233-256 (FGFEAAAWYWHFVDVVWLFLYVSI). The Mitochondrial intermembrane portion of the chain corresponds to 257–261 (YWWGS).

This sequence belongs to the cytochrome c oxidase subunit 3 family. Component of the cytochrome c oxidase (complex IV, CIV), a multisubunit enzyme composed of 14 subunits. The complex is composed of a catalytic core of 3 subunits MT-CO1, MT-CO2 and MT-CO3, encoded in the mitochondrial DNA, and 11 supernumerary subunits COX4I1 (or COX4I2), COX5A, COX5B, COX6A1 (or COX6A2), COX6B1 (or COX6B2), COX6C, COX7A2 (or COX7A1), COX7B, COX7C, COX8A and NDUFA4, which are encoded in the nuclear genome. The complex exists as a monomer or a dimer and forms supercomplexes (SCs) in the inner mitochondrial membrane with NADH-ubiquinone oxidoreductase (complex I, CI) and ubiquinol-cytochrome c oxidoreductase (cytochrome b-c1 complex, complex III, CIII), resulting in different assemblies (supercomplex SCI(1)III(2)IV(1) and megacomplex MCI(2)III(2)IV(2)).

It localises to the mitochondrion inner membrane. The enzyme catalyses 4 Fe(II)-[cytochrome c] + O2 + 8 H(+)(in) = 4 Fe(III)-[cytochrome c] + 2 H2O + 4 H(+)(out). Functionally, component of the cytochrome c oxidase, the last enzyme in the mitochondrial electron transport chain which drives oxidative phosphorylation. The respiratory chain contains 3 multisubunit complexes succinate dehydrogenase (complex II, CII), ubiquinol-cytochrome c oxidoreductase (cytochrome b-c1 complex, complex III, CIII) and cytochrome c oxidase (complex IV, CIV), that cooperate to transfer electrons derived from NADH and succinate to molecular oxygen, creating an electrochemical gradient over the inner membrane that drives transmembrane transport and the ATP synthase. Cytochrome c oxidase is the component of the respiratory chain that catalyzes the reduction of oxygen to water. Electrons originating from reduced cytochrome c in the intermembrane space (IMS) are transferred via the dinuclear copper A center (CU(A)) of subunit 2 and heme A of subunit 1 to the active site in subunit 1, a binuclear center (BNC) formed by heme A3 and copper B (CU(B)). The BNC reduces molecular oxygen to 2 water molecules using 4 electrons from cytochrome c in the IMS and 4 protons from the mitochondrial matrix. The protein is Cytochrome c oxidase subunit 3 (MT-CO3) of Homo sapiens (Human).